Consider the following 299-residue polypeptide: GTP cyclohydrolase FolE2 (299 aa).

Belongs to the GTP cyclohydrolase IV family.

The enzyme catalyses GTP + H2O = 7,8-dihydroneopterin 3'-triphosphate + formate + H(+). It participates in cofactor biosynthesis; 7,8-dihydroneopterin triphosphate biosynthesis; 7,8-dihydroneopterin triphosphate from GTP: step 1/1. Functionally, converts GTP to 7,8-dihydroneopterin triphosphate. The sequence is that of GTP cyclohydrolase FolE2 from Klebsiella pneumoniae.